A 558-amino-acid chain; its full sequence is Glutamine-dependent NAD(+) synthetase (558 aa).

A CN hydrolase domain is found at 2–262; the sequence is FTIALAQLNP…LALLSYDLSS (261 aa). Glutamate 42 (proton acceptor; for glutaminase activity) is an active-site residue. Residue lysine 117 is the For glutaminase activity of the active site. Residue tyrosine 123 coordinates L-glutamine. Catalysis depends on cysteine 153, which acts as the Nucleophile; for glutaminase activity. L-glutamine-binding residues include serine 190 and lysine 196. The interval 284–558 is ligase; sequence ALVLGVGDYL…IAQAFHPQGS (275 aa). 304–311 is an ATP binding site; sequence GLSGGIDS. Asparagine 387 lines the deamido-NAD(+) pocket. Threonine 411 is a binding site for ATP. 2 residues coordinate deamido-NAD(+): glutamate 416 and lysine 526.

This sequence in the C-terminal section; belongs to the NAD synthetase family.

It carries out the reaction deamido-NAD(+) + L-glutamine + ATP + H2O = L-glutamate + AMP + diphosphate + NAD(+) + H(+). It functions in the pathway cofactor biosynthesis; NAD(+) biosynthesis; NAD(+) from deamido-NAD(+) (L-Gln route): step 1/1. Catalyzes the ATP-dependent amidation of deamido-NAD to form NAD. Uses L-glutamine as a nitrogen source. This is Glutamine-dependent NAD(+) synthetase from Synechocystis sp. (strain ATCC 27184 / PCC 6803 / Kazusa).